The following is a 334-amino-acid chain: MGSIGSMNKPSEGMLMGLVQYPVPIVNSRRDIEASVDRICAATAATKAGYPGMDLIVWPEYSTQGLNTKKWVTEEFLMDVEEPLFQRYAQTCKENDVWGVFSIMERNPNKNQMPYNTAVIFNNKGELALKYRKLNPWVPIEPWMPGDLGQPVCDGPGGSKLSLCICHDGMFPEQAREAAYKGCNVYIRISGYSTQVNEQWILTNRSNAWHNLMYTAAVNLAGYDGVFYYFGEGQVCNFDGTTLVQGHRNPWEIVTAEVFPKMADQARTDWGLENNIFNVGTRGYVAHPGGVKDCPYTWVKDFAAGKYHLPWEDKIKIKDGSIYGYPTTGGRFGL.

Residues 14–260 form the CN hydrolase domain; the sequence is MLMGLVQYPV…WEIVTAEVFP (247 aa). Catalysis depends on Glu-60, which acts as the Proton acceptor. Residue Lys-133 is the Proton donor of the active site. Catalysis depends on Cys-166, which acts as the Nucleophile.

This sequence belongs to the carbon-nitrogen hydrolase superfamily. Aliphatic amidase family.

The catalysed reaction is formamide + H2O = formate + NH4(+). Functionally, is an aliphatic amidase with a restricted substrate specificity, as it only hydrolyzes formamide. The polypeptide is Formamidase (Nitratidesulfovibrio vulgaris (strain DP4) (Desulfovibrio vulgaris)).